Consider the following 143-residue polypeptide: Large ribosomal subunit protein uL11 (143 aa).

This sequence belongs to the universal ribosomal protein uL11 family. Part of the ribosomal stalk of the 50S ribosomal subunit. Interacts with L10 and the large rRNA to form the base of the stalk. L10 forms an elongated spine to which L12 dimers bind in a sequential fashion forming a multimeric L10(L12)X complex. Post-translationally, one or more lysine residues are methylated.

Forms part of the ribosomal stalk which helps the ribosome interact with GTP-bound translation factors. This Thioalkalivibrio sulfidiphilus (strain HL-EbGR7) protein is Large ribosomal subunit protein uL11.